We begin with the raw amino-acid sequence, 113 residues long: Small ribosomal subunit protein bS6 (113 aa).

It belongs to the bacterial ribosomal protein bS6 family.

Its function is as follows. Binds together with bS18 to 16S ribosomal RNA. This is Small ribosomal subunit protein bS6 from Pseudoalteromonas translucida (strain TAC 125).